Here is an 869-residue protein sequence, read N- to C-terminus: Phosphatidylethanolamine N-methyltransferase (869 aa).

Residue Ser-2 is modified to N-acetylserine. The Lumenal segment spans residues Ser-2–Ser-55. A helical membrane pass occupies residues Leu-56–Phe-76. At Gln-77–Tyr-86 the chain is on the cytoplasmic side. A helical membrane pass occupies residues Phe-87–Leu-107. The Lumenal segment spans residues His-108–Gln-187. Residues Phe-188 to Ile-208 form a helical membrane-spanning segment. Residues Pro-209–Trp-212 lie on the Cytoplasmic side of the membrane. Residues Val-213 to Val-233 form a helical membrane-spanning segment. The Lumenal segment spans residues Lys-234–Glu-258. A helical membrane pass occupies residues Leu-259–Gly-279. The Cytoplasmic segment spans residues Tyr-280–Lys-291. The helical transmembrane segment at Val-292 to Val-310 threads the bilayer. The Lumenal segment spans residues Glu-311–Arg-362. Residues Phe-363–Ala-383 traverse the membrane as a helical segment. Over Arg-384 to Asn-389 the chain is Cytoplasmic. Residues Tyr-390–Leu-410 traverse the membrane as a helical segment. Residues Tyr-411–Phe-439 are Lumenal-facing. A helical membrane pass occupies residues Ile-440 to Ile-460. The Cytoplasmic segment spans residues Trp-461–Asn-463. Residues Phe-464 to Trp-484 form a helical membrane-spanning segment. Over Cys-485–Gly-534 the chain is Lumenal. Residues Val-535–Trp-555 form a helical membrane-spanning segment. The Cytoplasmic portion of the chain corresponds to Thr-556 to Ala-869.

It belongs to the class VI-like SAM-binding methyltransferase superfamily. CHO2 family.

The protein resides in the endoplasmic reticulum membrane. The catalysed reaction is a 1,2-diacyl-sn-glycero-3-phosphoethanolamine + S-adenosyl-L-methionine = a 1,2-diacyl-sn-glycero-3-phospho-N-methylethanolamine + S-adenosyl-L-homocysteine + H(+). It functions in the pathway phospholipid metabolism; phosphatidylcholine biosynthesis. Catalyzes the first step of the methylation pathway of phosphatidylcholine biosynthesis, the SAM-dependent methylation of phosphatidylethanolamine (PE) to phosphatidylmonomethylethanolamine (PMME). Preferentially converts di-C16:1 substrates. This Saccharomyces cerevisiae (strain ATCC 204508 / S288c) (Baker's yeast) protein is Phosphatidylethanolamine N-methyltransferase.